Here is a 395-residue protein sequence, read N- to C-terminus: Probable inactive serine/threonine-protein kinase DDB_G0293746 (395 aa).

The region spanning 9 to 395 (YSEIDLISDN…ITQFIIDYLF (387 aa)) is the Protein kinase domain. Residues 15 to 23 (ISDNPFKNY) and K54 contribute to the ATP site. Residues 213–266 (NSSLSSLSSSTSSSSSSSSSTNCNNNTTENNNNNYNNNNNNNNNNNNNNNNNSL) form a disordered region.

The protein belongs to the protein kinase superfamily. Ser/Thr protein kinase family.

This is Probable inactive serine/threonine-protein kinase DDB_G0293746 from Dictyostelium discoideum (Social amoeba).